A 251-amino-acid chain; its full sequence is Malonyl-[acyl-carrier protein] O-methyltransferase (251 aa).

The protein belongs to the methyltransferase superfamily.

It catalyses the reaction malonyl-[ACP] + S-adenosyl-L-methionine = malonyl-[ACP] methyl ester + S-adenosyl-L-homocysteine. It participates in cofactor biosynthesis; biotin biosynthesis. In terms of biological role, converts the free carboxyl group of a malonyl-thioester to its methyl ester by transfer of a methyl group from S-adenosyl-L-methionine (SAM). It allows to synthesize pimeloyl-ACP via the fatty acid synthetic pathway. The chain is Malonyl-[acyl-carrier protein] O-methyltransferase from Enterobacter lignolyticus (strain SCF1).